We begin with the raw amino-acid sequence, 375 residues long: MQCALYDAGRCRSCQWITQPIPEQLSAKTADLKNLLADFPVEEWCAPVSGPEQGFRNKAKMVVSGSVEKPLLGMLHRDGTPEDLCDCPLYPASFAPVFAALKPFIARAGLTPYNVARKRGELKYILLTESQSDGGMMLRFVLRSETKLAQLRKALPWLQEQLPQLKVITVNIQPVHMAIMEGETEIYLTEQQALAERFNDVPLWIRPQSFFQTNPAVASQLYATARDWVRQLPVKHMWDLFCGVGGFGLHCATPDMQLTGIEIASEAIACAKQSAAELGLTRLQFQALDSTQFATAQGEVPELVLVNPPRRGIGKPLCDYLSTMAPRFIIYSSCNAQTMAKDIRELPGYRIERVQLFDMFPHTAHYEVLTLLVKQ.

The [4Fe-4S] cluster site is built by Cys-3, Cys-11, Cys-14, and Cys-87. Positions 212, 241, 262, and 307 each coordinate S-adenosyl-L-methionine. The Nucleophile role is filled by Cys-334.

Belongs to the class I-like SAM-binding methyltransferase superfamily. RNA M5U methyltransferase family. RlmC subfamily.

The catalysed reaction is uridine(747) in 23S rRNA + S-adenosyl-L-methionine = 5-methyluridine(747) in 23S rRNA + S-adenosyl-L-homocysteine + H(+). In terms of biological role, catalyzes the formation of 5-methyl-uridine at position 747 (m5U747) in 23S rRNA. This Escherichia coli O139:H28 (strain E24377A / ETEC) protein is 23S rRNA (uracil(747)-C(5))-methyltransferase RlmC.